Reading from the N-terminus, the 522-residue chain is MMLRGNLKQVRIEKNPARLRALESAAGESEPVAAAAMALTLAGEQPPPPAPSEEHPDEEMGFTIDIKSFLKPGEKTYTQRCRLFVGNLPTDITEEDFKRLFERYGEPSEVFINRDRGFGFIRLESRTLAEIAKAELDGTILKSRPLRIRFATHGAALTVKNLSPVVSNELLEQAFSQFGPVEKAVVVVDDRGRATGKGFVEFAAKPPARKALERCGDGAFLLTTTPRPVIVEPMEQFDDEDGLPEKLMQKTQQYHKEREQPPRFAQPGTFEFEYASRWKALDEMEKQQREQVDRNIREAKEKLEAEMEAARHEHQLMLMRQDLMRRQEELRRLEELRNQELQKRKQIQLRHEEEHRRREEEMIRHREQEELRRQQEGFKPNYMENREQEMRMGDMGPRGAINMGDAFSPAPAGTQGPPPMMGMNMNNRGTIPGPPMGPGPAMGPEGAANMGTPMIPDNGAVHNDRFPQGPPSQMGSPMGNRTGSETPQAPMSAVGPVSGGPGGFGRGSQGGNFEGPNKRRRY.

Position 1 is an N-acetylmethionine (methionine 1). RRM domains lie at 81 to 153 (CRLF…FATH) and 155 to 236 (AALT…PMEQ). Residues 124-357 (ESRTLAEIAK…QLRHEEEHRR (234 aa)) are sufficient for paraspeckles localization. Residues 230–357 (IVEPMEQFDD…QLRHEEEHRR (128 aa)) are sufficient for perinucleolar caps localization and interaction with NONO. Positions 282–376 (DEMEKQQREQ…EQEELRRQQE (95 aa)) form a coiled coil. Serine 408, serine 472, and serine 476 each carry phosphoserine. The disordered stretch occupies residues 459 to 522 (GAVHNDRFPQ…FEGPNKRRRY (64 aa)). The span at 471-489 (PSQMGSPMGNRTGSETPQA) shows a compositional bias: polar residues. A compositionally biased stretch (gly residues) spans 497 to 513 (VSGGPGGFGRGSQGGNF). Omega-N-methylarginine is present on arginine 506. The residue at position 508 (serine 508) is a Phosphoserine.

It belongs to the PSPC family. As to quaternary structure, forms heterodimers with NONO; this involves formation of a coiled coil domain by helices from both proteins. Found in a RNP complex with CAT2 transcribed nuclear RNA (CTN-RNA). Interaction with NONO is required for its targeting to paraspeckles and perinucleolar caps. Interacts with SFPQ. Part of the HDP-RNP complex composed of at least HEXIM1, PRKDC, XRCC5, XRCC6, paraspeckle proteins (SFPQ, NONO, PSPC1, RBM14, and MATR3) and NEAT1 RNA. Interacts with ALKBH5 (when acetylated); interaction with acetylated ALKBH5 facilitates recognition of N(6)-methyladenosine (m6A) RNAs.

The protein localises to the nucleus speckle. Its subcellular location is the nucleus. It is found in the nucleolus. It localises to the nucleus matrix. The protein resides in the cytoplasm. In terms of biological role, RNA-binding protein required for the formation of nuclear paraspeckles. Binds to poly(A), poly(G) and poly(U) RNA homopolymers. Regulates, cooperatively with NONO and SFPQ, androgen receptor-mediated gene transcription activity in Sertoli cell line. Regulates the circadian clock by repressing the transcriptional activator activity of the CLOCK-BMAL1 heterodimer. Plays a role in the regulation of DNA virus-mediated innate immune response by assembling into the HDP-RNP complex, a complex that serves as a platform for IRF3 phosphorylation and subsequent innate immune response activation through the cGAS-STING pathway. In Rattus norvegicus (Rat), this protein is Paraspeckle component 1 (Pspc1).